The primary structure comprises 1316 residues: DNA-directed RNA polymerase subunit beta' (1316 aa).

The Zn(2+) site is built by cysteine 60, cysteine 62, cysteine 75, and cysteine 78. Residues aspartate 535, aspartate 537, and aspartate 539 each coordinate Mg(2+). Residues cysteine 891, cysteine 968, cysteine 975, and cysteine 978 each coordinate Zn(2+).

It belongs to the RNA polymerase beta' chain family. As to quaternary structure, the RNAP catalytic core consists of 2 alpha, 1 beta, 1 beta' and 1 omega subunit. When a sigma factor is associated with the core the holoenzyme is formed, which can initiate transcription. Requires Mg(2+) as cofactor. Zn(2+) serves as cofactor.

It catalyses the reaction RNA(n) + a ribonucleoside 5'-triphosphate = RNA(n+1) + diphosphate. In terms of biological role, DNA-dependent RNA polymerase catalyzes the transcription of DNA into RNA using the four ribonucleoside triphosphates as substrates. This is DNA-directed RNA polymerase subunit beta' from Mycobacterium tuberculosis (strain ATCC 25177 / H37Ra).